Here is a 588-residue protein sequence, read N- to C-terminus: Sulfite reductase [NADPH] hemoprotein beta-component (588 aa).

[4Fe-4S] cluster-binding residues include C442, C448, C487, and C491. C491 provides a ligand contact to siroheme.

The protein belongs to the nitrite and sulfite reductase 4Fe-4S domain family. Alpha(8)-beta(8). The alpha component is a flavoprotein, the beta component is a hemoprotein. Siroheme is required as a cofactor. The cofactor is [4Fe-4S] cluster.

It carries out the reaction hydrogen sulfide + 3 NADP(+) + 3 H2O = sulfite + 3 NADPH + 4 H(+). Its pathway is sulfur metabolism; hydrogen sulfide biosynthesis; hydrogen sulfide from sulfite (NADPH route): step 1/1. Its function is as follows. Component of the sulfite reductase complex that catalyzes the 6-electron reduction of sulfite to sulfide. This is one of several activities required for the biosynthesis of L-cysteine from sulfate. This chain is Sulfite reductase [NADPH] hemoprotein beta-component, found in Actinobacillus pleuropneumoniae serotype 7 (strain AP76).